We begin with the raw amino-acid sequence, 383 residues long: Dual-specificity RNA methyltransferase RlmN (383 aa).

Residue Glu95 is the Proton acceptor of the active site. Positions 101–349 constitute a Radical SAM core domain; it reads EETRGTLCVS…TTVRKTRGDD (249 aa). A disulfide bridge connects residues Cys108 and Cys354. The [4Fe-4S] cluster site is built by Cys115, Cys119, and Cys122. Residues 180-181, Ser212, 234-236, and Asn311 each bind S-adenosyl-L-methionine; these read GE and SLH. Cys354 (S-methylcysteine intermediate) is an active-site residue.

The protein belongs to the radical SAM superfamily. RlmN family. Requires [4Fe-4S] cluster as cofactor.

Its subcellular location is the cytoplasm. It catalyses the reaction adenosine(2503) in 23S rRNA + 2 reduced [2Fe-2S]-[ferredoxin] + 2 S-adenosyl-L-methionine = 2-methyladenosine(2503) in 23S rRNA + 5'-deoxyadenosine + L-methionine + 2 oxidized [2Fe-2S]-[ferredoxin] + S-adenosyl-L-homocysteine. The catalysed reaction is adenosine(37) in tRNA + 2 reduced [2Fe-2S]-[ferredoxin] + 2 S-adenosyl-L-methionine = 2-methyladenosine(37) in tRNA + 5'-deoxyadenosine + L-methionine + 2 oxidized [2Fe-2S]-[ferredoxin] + S-adenosyl-L-homocysteine. In terms of biological role, specifically methylates position 2 of adenine 2503 in 23S rRNA and position 2 of adenine 37 in tRNAs. m2A2503 modification seems to play a crucial role in the proofreading step occurring at the peptidyl transferase center and thus would serve to optimize ribosomal fidelity. This Paraburkholderia phytofirmans (strain DSM 17436 / LMG 22146 / PsJN) (Burkholderia phytofirmans) protein is Dual-specificity RNA methyltransferase RlmN.